A 142-amino-acid chain; its full sequence is 3-hydroxyacyl-[acyl-carrier-protein] dehydratase FabZ (142 aa).

Residue histidine 48 is part of the active site.

Belongs to the thioester dehydratase family. FabZ subfamily.

Its subcellular location is the cytoplasm. The catalysed reaction is a (3R)-hydroxyacyl-[ACP] = a (2E)-enoyl-[ACP] + H2O. Involved in unsaturated fatty acids biosynthesis. Catalyzes the dehydration of short chain beta-hydroxyacyl-ACPs and long chain saturated and unsaturated beta-hydroxyacyl-ACPs. The polypeptide is 3-hydroxyacyl-[acyl-carrier-protein] dehydratase FabZ (Prochlorococcus marinus (strain MIT 9313)).